The primary structure comprises 2495 residues: Zinc finger protein 462 (2495 aa).

C2H2-type zinc fingers lie at residues 4-27 (LQCDGCDFRAPSYEDLKAHIQDVH), 108-131 (FQCKFCVRYFRSKNLLIEHTRKVH), and 162-185 (FSCQFCTYKSPRRARIIKHQKMYH). Lysine 20 participates in a covalent cross-link: Glycyl lysine isopeptide (Lys-Gly) (interchain with G-Cter in SUMO1); alternate. A Glycyl lysine isopeptide (Lys-Gly) (interchain with G-Cter in SUMO2); alternate cross-link involves residue lysine 20. The interaction with PBX1 stretch occupies residues 215–241 (PCKELPAEVVERSILESMVKPLTKSRG). Residues lysine 234 and lysine 271 each participate in a glycyl lysine isopeptide (Lys-Gly) (interchain with G-Cter in SUMO2) cross-link. Disordered stretches follow at residues 278-301 (QQEGPNVSEAQNDNEPSPTSNSTY), 329-357 (RPNSSSTSKFSSSMSYPQMKPKSPHNSGL), and 370-395 (DMTNSSADLDTNSMLNDSSSDEDLNE). The segment covering 332–343 (SSSTSKFSSSMS) has biased composition (low complexity). Residues lysine 337, lysine 348, and lysine 350 each participate in a glycyl lysine isopeptide (Lys-Gly) (interchain with G-Cter in SUMO2) cross-link. Serine 351 and serine 355 each carry phosphoserine. Polar residues predominate over residues 370–387 (DMTNSSADLDTNSMLNDS). Lysine 429 participates in a covalent cross-link: Glycyl lysine isopeptide (Lys-Gly) (interchain with G-Cter in SUMO2). C2H2-type zinc fingers lie at residues 440-463 (FQCPFCPFLTMHRRSISRHIENIH) and 471-493 (YKCDECPFTCKSSLKLGAHKQCH). A Glycyl lysine isopeptide (Lys-Gly) (interchain with G-Cter in SUMO2) cross-link involves residue lysine 485. Positions 492-590 (CHTGTSDWDT…PQPPTQAPPL (99 aa)) are disordered. Over residues 493 to 502 (HTGTSDWDTV) the composition is skewed to polar residues. A compositionally biased stretch (low complexity) spans 503-515 (NSQSESLSSSLNE). Over residues 542–590 (PPQPPPPLPPPPPPPSQPLPQPPPPPLQSPHQVPPPTQQPQPPTQAPPL) the composition is skewed to pro residues. Residues 593 to 616 (YKCTMCSYSTMTLKGLRVHQQHKH) form a C2H2-type 6 zinc finger. Residues lysine 624, lysine 650, and lysine 661 each participate in a glycyl lysine isopeptide (Lys-Gly) (interchain with G-Cter in SUMO2) cross-link. Residues 629 to 654 (PSSLPLENETDSHPSSSNTVKKSQTS) form a disordered region. Positions 641-654 (HPSSSNTVKKSQTS) are enriched in polar residues. Serine 681 bears the Phosphoserine mark. Lysine 699 is covalently cross-linked (Glycyl lysine isopeptide (Lys-Gly) (interchain with G-Cter in SUMO2)). 3 consecutive C2H2-type zinc fingers follow at residues 835 to 858 (YYCKHCDFNNKSARSVSTHYQRMH), 878 to 900 (YRCLECYIDYTNFEDLQQHYGEH), and 917 to 940 (YRCRFCSYTSPNVRSLMPHYQRMH). Lysine 978 participates in a covalent cross-link: Glycyl lysine isopeptide (Lys-Gly) (interchain with G-Cter in SUMO2). Residues 980 to 999 (MATSTPVARGGGLPATFNKN) are disordered. The segment at 1023–1046 (YDCDVCSFASPNMHSVLVHYQKKH) adopts a C2H2-type 10 zinc-finger fold. At serine 1083 the chain carries Phosphoserine. Residue lysine 1128 forms a Glycyl lysine isopeptide (Lys-Gly) (interchain with G-Cter in SUMO2) linkage. Serine 1159 bears the Phosphoserine mark. Residues lysine 1196, lysine 1204, lysine 1210, and lysine 1232 each participate in a glycyl lysine isopeptide (Lys-Gly) (interchain with G-Cter in SUMO2) cross-link. C2H2-type zinc fingers lie at residues 1254–1277 (LKCRQCSYTSPYFYALRKHIKKDH) and 1459–1482 (YQCTVCQSEYNNLHGLLTHYGKKH). Residue lysine 1488 forms a Glycyl lysine isopeptide (Lys-Gly) (interchain with G-Cter in SUMO2) linkage. The C2H2-type 13 zinc finger occupies 1504-1527 (YKCRHCPYINTRIHGVLTHYQKRH). Glycyl lysine isopeptide (Lys-Gly) (interchain with G-Cter in SUMO2) cross-links involve residues lysine 1560 and lysine 1580. 3 C2H2-type zinc fingers span residues 1566–1589 (YRCKLCPYTHGTLEKLKIHYEKYH), 1649–1672 (FRCQLCKYFCSTRKGIARHYRIKH), and 1686–1709 (FKCALCAYTNPIRKGLAAHYQKRH). Glycyl lysine isopeptide (Lys-Gly) (interchain with G-Cter in SUMO2) cross-links involve residues lysine 1687 and lysine 1769. The C2H2-type 17 zinc finger occupies 1881-1903 (FQCKHCDSKLQSIAELTSHLNIH). Lysine 1935 is covalently cross-linked (Glycyl lysine isopeptide (Lys-Gly) (interchain with G-Cter in SUMO2)). The C2H2-type 18; degenerate zinc finger occupies 1957–1981 (YKCKFCVEVHPTLRAICNHLRKHVQ). Residue lysine 1993 is modified to N6-methyllysine. C2H2-type zinc fingers lie at residues 2014–2037 (YSCQYCSFVSAFRHNLDRHMQTHH), 2043–2066 (FRCKLCSFKSSYNSRLKTHILKAH), and 2072–2095 (YKCSWCSFSTMTISQLKEHSLKVH). Lysine 2093 is covalently cross-linked (Glycyl lysine isopeptide (Lys-Gly) (interchain with G-Cter in SUMO2)). Composition is skewed to polar residues over residues 2112–2121 (SHAHPSSQKA) and 2132–2149 (DSSYSEPPDVQQQLNHYQ). The tract at residues 2112–2172 (SHAHPSSQKA…VPPSGTAAGT (61 aa)) is disordered. Residues serine 2161 and serine 2166 each carry the phosphoserine modification. C2H2-type zinc fingers lie at residues 2180–2203 (LHCEFCEFSSGYIQSIRRHYRDKH), 2209–2232 (FKCKDCSFYTGFKSAFTMHVEAGH), and 2243–2265 (LRCPLCLYHTKYKRNMIDHIVLH). Lysine 2282 participates in a covalent cross-link: Glycyl lysine isopeptide (Lys-Gly) (interchain with G-Cter in SUMO2). 2 consecutive C2H2-type zinc fingers follow at residues 2289 to 2311 (FRCDKCTFTCSSDESLQQHIEKH) and 2317 to 2340 (YKCQLCYYETKHTEELDTHLRDEH). The tract at residues 2361-2387 (KEKIESSSSEDEDKDDEMSSKAEDREL) is disordered. Residues 2377–2387 (EMSSKAEDREL) show a composition bias toward basic and acidic residues. Residues 2403–2425 (FPCEFCGRAFSQGSEWERHVLRH) form a C2H2-type 27 zinc finger. Lysine 2493 participates in a covalent cross-link: Glycyl lysine isopeptide (Lys-Gly) (interchain with G-Cter in SUMO2).

In terms of assembly, interacts with PBX1 isoform PBX1b; this interaction prevents PBX1-HOXA9 heterodimer from forming and binding to DNA. In terms of tissue distribution, expressed in the cerebral cortex (at protein level). Expressed in embryonic stem cells (at protein level). Expressed in heart, liver, kidney, muscle, and female and male genital tracts (at protein level).

Its subcellular location is the nucleus. Zinc finger nuclear factor involved in transcription by regulating chromatin structure and organization. Involved in the pluripotency and differentiation of embryonic stem cells by regulating SOX2, POU5F1/OCT4, and NANOG. By binding PBX1, prevents the heterodimerization of PBX1 and HOXA9 and their binding to DNA. Regulates neuronal development and neural cell differentiation. This is Zinc finger protein 462 from Mus musculus (Mouse).